The primary structure comprises 231 residues: Succinate dehydrogenase subunit 5, mitochondrial (231 aa).

Residues 1 to 63 (MAAALRSSCA…AFSWNLRRLF (63 aa)) constitute a mitochondrion transit peptide.

In terms of assembly, component of complex II composed of eight subunits in plants: four classical SDH subunits SDH1, SDH2, SDH3 and SDH4 (a flavoprotein (FP), an iron-sulfur protein (IP), and a cytochrome b composed of a large and a small subunit.), as well as four subunits unknown in mitochondria from bacteria and heterotrophic eukaryotes.

It localises to the mitochondrion inner membrane. It participates in carbohydrate metabolism; tricarboxylic acid cycle. This chain is Succinate dehydrogenase subunit 5, mitochondrial, found in Oryza sativa subsp. japonica (Rice).